We begin with the raw amino-acid sequence, 263 residues long: Protein TILLER ANGLE CONTROL 1 (263 aa).

The short motif at 55–61 (GILAIGT) is the IGT motif element. The segment at 243–263 (GKKIHPEQLNGRSNAEGPLTA) is disordered.

This sequence belongs to the TAC family. In terms of tissue distribution, highly expressed in leaf sheath pulvinus. Expressed in shoot apical meristem and leaves.

Functionally, involved in the regulation of leaf growth angle. Promotes horizontal shoot growth. This chain is Protein TILLER ANGLE CONTROL 1, found in Zea mays (Maize).